The chain runs to 218 residues: Small ribosomal subunit protein uS3c (218 aa).

The 72-residue stretch at 47 to 118 folds into the KH type-2 domain; the sequence is VQKNMRIFSG…KLNIAITRIG (72 aa).

It belongs to the universal ribosomal protein uS3 family. As to quaternary structure, part of the 30S ribosomal subunit.

Its subcellular location is the plastid. The protein resides in the chloroplast. This chain is Small ribosomal subunit protein uS3c (rps3), found in Cucumis sativus (Cucumber).